A 431-amino-acid polypeptide reads, in one-letter code: Glutamate-1-semialdehyde 2,1-aminomutase 1 (431 aa).

Lysine 268 carries the post-translational modification N6-(pyridoxal phosphate)lysine.

It belongs to the class-III pyridoxal-phosphate-dependent aminotransferase family. HemL subfamily. In terms of assembly, homodimer. Requires pyridoxal 5'-phosphate as cofactor.

The protein localises to the cytoplasm. It catalyses the reaction (S)-4-amino-5-oxopentanoate = 5-aminolevulinate. The protein operates within porphyrin-containing compound metabolism; protoporphyrin-IX biosynthesis; 5-aminolevulinate from L-glutamyl-tRNA(Glu): step 2/2. In Bacillus pumilus (strain SAFR-032), this protein is Glutamate-1-semialdehyde 2,1-aminomutase 1.